The following is a 269-amino-acid chain: Regulating synaptic membrane exocytosis protein 4 (269 aa).

In terms of domain architecture, C2 spans Pro115–Tyr233. A phosphoserine mark is found at Ser254 and Ser257.

As to quaternary structure, binds PPFIA3. Does not bind RAB3.

The protein resides in the synapse. Functionally, regulates synaptic membrane exocytosis. The polypeptide is Regulating synaptic membrane exocytosis protein 4 (Rims4) (Mus musculus (Mouse)).